The chain runs to 204 residues: Thymidylate kinase (204 aa).

Residue 11 to 18 (GIDGAGKS) coordinates ATP.

It belongs to the thymidylate kinase family.

It carries out the reaction dTMP + ATP = dTDP + ADP. Functionally, phosphorylation of dTMP to form dTDP in both de novo and salvage pathways of dTTP synthesis. This is Thymidylate kinase from Janthinobacterium sp. (strain Marseille) (Minibacterium massiliensis).